We begin with the raw amino-acid sequence, 84 residues long: Cell division topological specificity factor (84 aa).

The protein belongs to the MinE family.

In terms of biological role, prevents the cell division inhibition by proteins MinC and MinD at internal division sites while permitting inhibition at polar sites. This ensures cell division at the proper site by restricting the formation of a division septum at the midpoint of the long axis of the cell. This chain is Cell division topological specificity factor, found in Rhodopseudomonas palustris (strain BisA53).